Here is a 367-residue protein sequence, read N- to C-terminus: Phospho-N-acetylmuramoyl-pentapeptide-transferase (367 aa).

Helical transmembrane passes span 34–54 (GAVVTGALFVFLFGPWIIDHL), 78–98 (TPTMGGLMILSGLTVGTVLWA), 101–121 (LNPYVWIVLAVTLGFGFVGFY), 135–155 (FGSKLRLLIEAAIALVACYAL), 175–195 (TVLHFGWFFVVFGAFVIVGAG), 206–226 (GLAIVPVMIATASFAMIAYLA), 246–266 (LAVLCGALLGAGLGFLWFNAP), 270–290 (IFMGDTGSLALGGMLGAIAVA), 295–315 (IVLAVIGGLFVLEAVSVIVQV), and 344–364 (QIVIRFWIISVMLALAGLSTL).

This sequence belongs to the glycosyltransferase 4 family. MraY subfamily. Mg(2+) serves as cofactor.

It localises to the cell inner membrane. It carries out the reaction UDP-N-acetyl-alpha-D-muramoyl-L-alanyl-gamma-D-glutamyl-meso-2,6-diaminopimeloyl-D-alanyl-D-alanine + di-trans,octa-cis-undecaprenyl phosphate = di-trans,octa-cis-undecaprenyl diphospho-N-acetyl-alpha-D-muramoyl-L-alanyl-D-glutamyl-meso-2,6-diaminopimeloyl-D-alanyl-D-alanine + UMP. It functions in the pathway cell wall biogenesis; peptidoglycan biosynthesis. Functionally, catalyzes the initial step of the lipid cycle reactions in the biosynthesis of the cell wall peptidoglycan: transfers peptidoglycan precursor phospho-MurNAc-pentapeptide from UDP-MurNAc-pentapeptide onto the lipid carrier undecaprenyl phosphate, yielding undecaprenyl-pyrophosphoryl-MurNAc-pentapeptide, known as lipid I. This is Phospho-N-acetylmuramoyl-pentapeptide-transferase from Bradyrhizobium diazoefficiens (strain JCM 10833 / BCRC 13528 / IAM 13628 / NBRC 14792 / USDA 110).